The following is a 65-amino-acid chain: Small ribosomal subunit protein bS21B (65 aa).

This sequence belongs to the bacterial ribosomal protein bS21 family.

The protein is Small ribosomal subunit protein bS21B of Francisella tularensis subsp. holarctica (strain LVS).